A 364-amino-acid polypeptide reads, in one-letter code: MSHNSFGHLFRVTTWGESHGPALGAVVDGCPPGLKFTLEDLQVWLDKRKPGQSRFVTQRREDDLVKVLSGVMPQDDGSMITTGTPISLMIENTDQRSKDYGEIAQQYRPGHADYTYDLKYGIRDYRGGGRSSARETAARVAAGGIARLVLPGVTIRGALVQIGTHKIDRANWDWSEVDNNPFFAPDPKIVPVWEDYLDQIRKQGSSVGAVVEVVAEGVPAGLGAPIYAKLDQDITALLMSINAVKGVEIGNGFGAAEITGEENADQMRMGNDGQPIFLSNHAGGILGGISTGEPIVARFAIKPTSSILTERQSIDSQGRNVDIRTKGRHDPCVGIRAVPVGEAMVACALADHYLRDRGQTGRLK.

NADP(+)-binding residues include Arg48 and Arg54. FMN is bound by residues 130–132 (RSS), 242–243 (NA), Gly287, 302–306 (KPTSS), and Arg328.

Belongs to the chorismate synthase family. Homotetramer. It depends on FMNH2 as a cofactor.

The catalysed reaction is 5-O-(1-carboxyvinyl)-3-phosphoshikimate = chorismate + phosphate. It participates in metabolic intermediate biosynthesis; chorismate biosynthesis; chorismate from D-erythrose 4-phosphate and phosphoenolpyruvate: step 7/7. Catalyzes the anti-1,4-elimination of the C-3 phosphate and the C-6 proR hydrogen from 5-enolpyruvylshikimate-3-phosphate (EPSP) to yield chorismate, which is the branch point compound that serves as the starting substrate for the three terminal pathways of aromatic amino acid biosynthesis. This reaction introduces a second double bond into the aromatic ring system. The sequence is that of Chorismate synthase from Allorhizobium ampelinum (strain ATCC BAA-846 / DSM 112012 / S4) (Agrobacterium vitis (strain S4)).